We begin with the raw amino-acid sequence, 259 residues long: Proteasome subunit alpha (259 aa).

The disordered stretch occupies residues 222-259; that stretch reads RITGPALEQLIPAEPAPASEPAPESKPDTETKPADPQD. Positions 244 to 259 are enriched in basic and acidic residues; that stretch reads PESKPDTETKPADPQD.

This sequence belongs to the peptidase T1A family. In terms of assembly, the 20S proteasome core is composed of 14 alpha and 14 beta subunits that assemble into four stacked heptameric rings, resulting in a barrel-shaped structure. The two inner rings, each composed of seven catalytic beta subunits, are sandwiched by two outer rings, each composed of seven alpha subunits. The catalytic chamber with the active sites is on the inside of the barrel. Has a gated structure, the ends of the cylinder being occluded by the N-termini of the alpha-subunits. Is capped by the proteasome-associated ATPase, ARC.

The protein resides in the cytoplasm. Its pathway is protein degradation; proteasomal Pup-dependent pathway. The formation of the proteasomal ATPase ARC-20S proteasome complex, likely via the docking of the C-termini of ARC into the intersubunit pockets in the alpha-rings, may trigger opening of the gate for substrate entry. Interconversion between the open-gate and close-gate conformations leads to a dynamic regulation of the 20S proteasome proteolysis activity. Its function is as follows. Component of the proteasome core, a large protease complex with broad specificity involved in protein degradation. The protein is Proteasome subunit alpha of Rhodococcus jostii (strain RHA1).